The following is a 522-amino-acid chain: DEAD-box ATP-dependent RNA helicase 1 (522 aa).

Positions 30–59 (CALDTLPCLNPKLKKALENMGISSLFPVQV) match the Q motif motif. Residues 66 to 297 (IGPGGFERDI…QLDLHHPLFM (232 aa)) form the Helicase ATP-binding domain. 79 to 86 (SPTGSGKT) is an ATP binding site. A DEAD box motif is present at residues 207–210 (DETD). Residues 325 to 475 (YLVALLKSWE…PIPPTSLDSI (151 aa)) enclose the Helicase C-terminal domain. The disordered stretch occupies residues 490 to 522 (VESEAPKKGRQAFRHNSRTGNSQTKLNKPRSEA). The segment covering 497–506 (KGRQAFRHNS) has biased composition (basic residues).

This sequence belongs to the DEAD box helicase family. DDX51/DBP6 subfamily.

It carries out the reaction ATP + H2O = ADP + phosphate + H(+). This chain is DEAD-box ATP-dependent RNA helicase 1 (RH1), found in Arabidopsis thaliana (Mouse-ear cress).